The chain runs to 163 residues: Oocyte-secreted protein 1 (163 aa).

A signal peptide spans 1-21; that stretch reads MKPSSGLRGLLVLFSLTWTCA.

The protein belongs to the PLAC1 family. As to expression, oocyte-specific.

It localises to the secreted. In terms of biological role, may be involved in cell differentiation. This chain is Oocyte-secreted protein 1 (OOSP1), found in Bos taurus (Bovine).